A 146-amino-acid chain; its full sequence is Hemoglobin subunit beta-1 (146 aa).

The region spanning 2 to 146 (GLTAHDRQLI…IADALGKGYH (145 aa)) is the Globin domain. Residues histidine 63 and histidine 92 each contribute to the heme b site.

Belongs to the globin family. As to quaternary structure, heterotetramer of two alpha chains and two beta chains. As to expression, red blood cells.

In terms of biological role, involved in oxygen transport from the lung to the various peripheral tissues. The polypeptide is Hemoglobin subunit beta-1 (hbb1) (Xenopus borealis (Kenyan clawed frog)).